The chain runs to 322 residues: Replication factor C small subunit (322 aa).

An ATP-binding site is contributed by 46 to 53 (GSAGVGKT).

The protein belongs to the activator 1 small subunits family. RfcS subfamily. In terms of assembly, heteromultimer composed of small subunits (RfcS) and large subunits (RfcL).

Functionally, part of the RFC clamp loader complex which loads the PCNA sliding clamp onto DNA. The sequence is that of Replication factor C small subunit from Methanoregula boonei (strain DSM 21154 / JCM 14090 / 6A8).